The sequence spans 153 residues: Protein SREK1IP1 (153 aa).

The CCHC-type zinc-finger motif lies at 13-30 (AGCRKCGYPGHLTFECRN). The tract at residues 44 to 153 (VSSTSSEDSD…SPNRSEVTKK (110 aa)) is disordered. S52 bears the Phosphoserine mark. The span at 66 to 84 (QEKRINEEEEKKKEKSREK) shows a compositional bias: basic and acidic residues. Residues 85 to 94 (IKLKKKRKRS) are compositionally biased toward basic residues. Residues S96 and S97 each carry the phosphoserine modification. Over residues 106-141 (QKKQKYQKKEKKKEKKNKSKKGKHHKKEKKKRKKEK) the composition is skewed to basic residues.

As to quaternary structure, interacts with SREK1/SFRS12.

Its function is as follows. Possible splicing regulator involved in the control of cellular survival. The polypeptide is Protein SREK1IP1 (Srek1ip1) (Rattus norvegicus (Rat)).